Consider the following 430-residue polypeptide: Histidine--tRNA ligase (430 aa).

The protein belongs to the class-II aminoacyl-tRNA synthetase family. In terms of assembly, homodimer.

It is found in the cytoplasm. The enzyme catalyses tRNA(His) + L-histidine + ATP = L-histidyl-tRNA(His) + AMP + diphosphate + H(+). The sequence is that of Histidine--tRNA ligase from Acaryochloris marina (strain MBIC 11017).